The primary structure comprises 611 residues: Leucine aminopeptidase (611 aa).

Substrate-binding positions include 129-131 and 278-282; these read QCQ and GGMEN. H305 provides a ligand contact to Zn(2+). E306 acts as the Proton acceptor in catalysis. The Zn(2+) site is built by H309 and E328. Y393 (proton donor) is an active-site residue. Residue 562–564 participates in substrate binding; the sequence is RMK.

The protein belongs to the peptidase M1 family. Zn(2+) serves as cofactor.

It is found in the cytoplasm. It catalyses the reaction an epoxide + H2O = an ethanediol. In terms of biological role, aminopeptidase that preferentially cleaves di- and tripeptides. Also has low epoxide hydrolase activity (in vitro). Can hydrolyze the epoxide leukotriene LTA(4) but it forms preferentially 5,6-dihydroxy-7,9,11,14-eicosatetraenoic acid rather than the cytokine leukotriene B(4) as the product compared to the homologous mammalian enzyme (in vitro). The polypeptide is Leucine aminopeptidase (LKHA4) (Oryza sativa subsp. japonica (Rice)).